The sequence spans 591 residues: Parathyroid hormone/parathyroid hormone-related peptide receptor (591 aa).

An N-terminal signal peptide occupies residues 1–26 (MGAARIAPSLALLLCCPVLSSAYALV). The Extracellular segment spans residues 27–188 (DADDVFTKEE…REREVFDRLG (162 aa)). Intrachain disulfides connect Cys48–Cys117, Cys108–Cys148, and Cys131–Cys170. A disordered region spans residues 67 to 104 (KGWTPASTSGKPRKEKASGKFYPESKENKDVPTGSRRR). The span at 81–96 (EKASGKFYPESKENKD) shows a compositional bias: basic and acidic residues. Asn151, Asn161, Asn166, and Asn176 each carry an N-linked (GlcNAc...) asparagine glycan. The chain crosses the membrane as a helical span at residues 189–212 (MIYTVGYSMSLASLTVAVLILAYF). Residues 213-219 (RRLHCTR) are Cytoplasmic-facing. The chain crosses the membrane as a helical span at residues 220–239 (NYIHMHMFLSFMLRAASIFV). The Extracellular segment spans residues 240–282 (KDAVLYSGFTLDEAERLTEEELHIIAQVPPPPAAAAVGYAGCR). Residues 283-306 (VAVTFFLYFLATNYYWILVEGLYL) traverse the membrane as a helical segment. Residues 307–320 (HSLIFMAFFSEKKY) lie on the Cytoplasmic side of the membrane. A helical membrane pass occupies residues 321–342 (LWGFTIFGWGLPAVFVAVWVGV). Topologically, residues 343–361 (RATLANTGCWDLSSGHKKW) are extracellular. The helical transmembrane segment at 362-382 (IIQVPILASVVLNFILFINII) threads the bilayer. At 383–409 (RVLATKLRETNAGRCDTRQQYRKLLRS) the chain is on the cytoplasmic side. Residues 410-428 (TLVLVPLFGVHYTVFMALP) form a helical membrane-spanning segment. Over 429 to 440 (YTEVSGTLWQIQ) the chain is Extracellular. Residues 441–463 (MHYEMLFNSFQGFFVAIIYCFCN) form a helical membrane-spanning segment. Topologically, residues 464 to 591 (GEVQAEIRKS…LLQEEWETVM (128 aa)) are cytoplasmic. An Important for interaction with G proteins motif is present at residues 474 to 477 (WSRW). A disordered region spans residues 516-544 (LPLSPRLPPATTNGHSQLPGHAKPGAPAT).

Belongs to the G-protein coupled receptor 2 family. As to quaternary structure, homodimer in the absence of bound ligand. Peptide hormone binding leads to dissociation of the homodimer. N-glycosylated.

The protein resides in the cell membrane. Its function is as follows. G-protein-coupled receptor for parathyroid hormone (PTH) and for parathyroid hormone-related peptide (PTHLH). Ligand binding causes a conformation change that triggers signaling via guanine nucleotide-binding proteins (G proteins) and modulates the activity of downstream effectors, such as adenylate cyclase (cAMP). PTH1R is coupled to G(s) G alpha proteins and mediates activation of adenylate cyclase activity. PTHLH dissociates from PTH1R more rapidly than PTH; as consequence, the cAMP response induced by PTHLH decays faster than the response induced by PTH. This chain is Parathyroid hormone/parathyroid hormone-related peptide receptor (Pth1r), found in Rattus norvegicus (Rat).